We begin with the raw amino-acid sequence, 99 residues long: MSTAQSLKSVDYEVFGRVQGVCFRMYTEDEARKIGVVGWVKNTSKGTVTGQVQGPEDKVNSMKSWLSKVGSPSSRIDRTNFSNEKTISKLEYSNFSIRY.

Ser2 carries the post-translational modification N-acetylserine. One can recognise an Acylphosphatase-like domain in the interval Ser9–Tyr99. Active-site residues include Arg24 and Asn42. Residue Ser93 is modified to Phosphoserine.

The protein belongs to the acylphosphatase family.

It carries out the reaction an acyl phosphate + H2O = a carboxylate + phosphate + H(+). In terms of biological role, its physiological role is not yet clear. This Homo sapiens (Human) protein is Acylphosphatase-2 (ACYP2).